Reading from the N-terminus, the 704-residue chain is MVHVNPIVKSFQYGQHTVTLETGVIARQADAAVLASMGDTTVLVTVVGKKFEEPGRDFFPLTVNYQEKTYAAGKIPGGFFKREGRPSEGETLTARLIDRPIRPLFPNGFKNEVQVIITVVSVDPEISPEVISMIGTSAALSISGIPFNGPLGSARVGYVNGEYILNPTVSQLVDSQLELSVAGTESAVLMVESEASALPEEVMLGAVVYGHDQQQVVIQAIKELQAEVNKPVWDWSAPAQDETLVAKIKDLAEAGLTEAYQIEVKQDRYAQVGVVKNAAKEALLAENPDANTREIDGLLGSLEKKVVRGRIISGQPRIDGREPDMVRALNVMAGVLPRTHGSSLFTRGETQALVTCTLGTERDAQKIDSIMGEYTNRFMLHYNFPPYSVGETGMVGSPKRREIGHGKLAWRGINAVMPTAEEFPYSVRIVSEITESNGSSSMASVCGTSLALMDAGVPIKTSVAGIAMGLVKEGDDFVVLSDILGDEDHLGDMDFKVAGTRDGITALQMDIKIEGITKEIMQIALKQAYGARVHILDVMDRAISGHRGDISEHAPRITTIKINPEKIRDVIGKGGATIRALTEETGTTIELDDDGTVKIASSNGEATKEAIRRIEEITAEVEVGTVYNGKVVRIVDFGAFVTILPGKDGLVHISQIAEERVANVSDYLEVGQEVKVKVMEVDRQGRVRLSMKEAAPKAEAPAAE.

Mg(2+)-binding residues include D488 and D494. A KH domain is found at 555 to 614; sequence PRITTIKINPEKIRDVIGKGGATIRALTEETGTTIELDDDGTVKIASSNGEATKEAIRRI. In terms of domain architecture, S1 motif spans 624-692; sequence GTVYNGKVVR…RQGRVRLSMK (69 aa).

It belongs to the polyribonucleotide nucleotidyltransferase family. Component of the RNA degradosome, which is a multiprotein complex involved in RNA processing and mRNA degradation. Mg(2+) serves as cofactor.

It localises to the cytoplasm. It carries out the reaction RNA(n+1) + phosphate = RNA(n) + a ribonucleoside 5'-diphosphate. Functionally, involved in mRNA degradation. Catalyzes the phosphorolysis of single-stranded polyribonucleotides processively in the 3'- to 5'-direction. The polypeptide is Polyribonucleotide nucleotidyltransferase (Shewanella pealeana (strain ATCC 700345 / ANG-SQ1)).